The following is a 138-amino-acid chain: Putative pre-16S rRNA nuclease (138 aa).

The protein belongs to the YqgF nuclease family.

It is found in the cytoplasm. Functionally, could be a nuclease involved in processing of the 5'-end of pre-16S rRNA. The chain is Putative pre-16S rRNA nuclease from Listeria monocytogenes serovar 1/2a (strain ATCC BAA-679 / EGD-e).